Here is a 479-residue protein sequence, read N- to C-terminus: Shugoshin (479 aa).

Positions S36 to L76 form a coiled coil. Disordered stretches follow at residues S109 to D145, E220 to T247, and A263 to P479. Over residues Q123–V132 the composition is skewed to basic and acidic residues. Acidic residues predominate over residues E270 to F286. Composition is skewed to polar residues over residues R290–H303 and Q318–H328. Basic and acidic residues-rich tracts occupy residues P335–E352 and G379–L388. A compositionally biased stretch (polar residues) spans K400–T411.

It belongs to the shugoshin family.

Its subcellular location is the nucleus. It localises to the chromosome. The protein resides in the centromere. Functionally, plays a central role in chromosome cohesion during cell division by preventing premature dissociation of cohesin complex from centromeres after prophase, when most of cohesin complex dissociates from chromosomes arms. In Emericella nidulans (strain FGSC A4 / ATCC 38163 / CBS 112.46 / NRRL 194 / M139) (Aspergillus nidulans), this protein is Shugoshin (sgo1).